We begin with the raw amino-acid sequence, 438 residues long: 3-phosphoshikimate 1-carboxyvinyltransferase 1 (438 aa).

3-phosphoshikimate is bound by residues K30, S31, and R35. K30 provides a ligand contact to phosphoenolpyruvate. The phosphoenolpyruvate site is built by G104 and R132. 3-phosphoshikimate contacts are provided by S178, S179, Q180, S207, E326, and H353. Q180 is a phosphoenolpyruvate binding site. Residue E326 is the Proton acceptor of the active site. Phosphoenolpyruvate is bound by residues R357, R398, and K423.

Belongs to the EPSP synthase family. In terms of assembly, monomer.

The protein resides in the cytoplasm. It carries out the reaction 3-phosphoshikimate + phosphoenolpyruvate = 5-O-(1-carboxyvinyl)-3-phosphoshikimate + phosphate. It participates in metabolic intermediate biosynthesis; chorismate biosynthesis; chorismate from D-erythrose 4-phosphate and phosphoenolpyruvate: step 6/7. Catalyzes the transfer of the enolpyruvyl moiety of phosphoenolpyruvate (PEP) to the 5-hydroxyl of shikimate-3-phosphate (S3P) to produce enolpyruvyl shikimate-3-phosphate and inorganic phosphate. This Streptomyces coelicolor (strain ATCC BAA-471 / A3(2) / M145) protein is 3-phosphoshikimate 1-carboxyvinyltransferase 1.